Reading from the N-terminus, the 224-residue chain is Probable proteasome subunit beta type-4 (224 aa).

This sequence belongs to the peptidase T1B family. As to quaternary structure, the 26S proteasome consists of a 20S proteasome core and two 19S regulatory subunits. The 20S proteasome core is composed of 28 subunits that are arranged in four stacked rings, resulting in a barrel-shaped structure. The two end rings are each formed by seven alpha subunits, and the two central rings are each formed by seven beta subunits. The catalytic chamber with the active sites is on the inside of the barrel.

It is found in the cytoplasm. The protein resides in the nucleus. Its function is as follows. Non-catalytic component of the proteasome, a multicatalytic proteinase complex which is characterized by its ability to cleave peptides with Arg, Phe, Tyr, Leu, and Glu adjacent to the leaving group at neutral or slightly basic pH. The proteasome has an ATP-dependent proteolytic activity. The sequence is that of Probable proteasome subunit beta type-4 (CPR1) from Cryptococcus neoformans var. neoformans serotype D (strain B-3501A) (Filobasidiella neoformans).